A 264-amino-acid polypeptide reads, in one-letter code: Proliferating cell nuclear antigen 2 (264 aa).

It belongs to the PCNA family. Homotrimer. Oligomer. Interacts with ORC1 (via PIP-box motif). Interacts with FEN1.

The protein resides in the nucleus. It localises to the chromosome. It is found in the cytoplasm. May be involved in DNA damage response. Appears not to be involved in DNA replication in trophozoites. This Plasmodium falciparum (isolate 3D7) protein is Proliferating cell nuclear antigen 2.